A 78-amino-acid chain; its full sequence is Structural DNA-binding protein p10 (78 aa).

A compositionally biased stretch (low complexity) spans 1–24 (MPTKAGTKSTANKKTTKGSSKSGS). A disordered region spans residues 1–41 (MPTKAGTKSTANKKTTKGSSKSGSPRGHTGKTHAPPSMHSG).

The protein belongs to the asfivirus P10 family.

It localises to the virion. In terms of biological role, may play a role in genome packaging through direct interaction with viral DNA. Binds to ssDNA and dsDNA with the same apparent affinity in vitro. This chain is Structural DNA-binding protein p10, found in African swine fever virus (isolate Tick/South Africa/Pretoriuskop Pr4/1996) (ASFV).